The primary structure comprises 1386 residues: DNA-directed RNA polymerase subunit beta'' (1386 aa).

Positions 224, 294, 301, and 304 each coordinate Zn(2+).

It belongs to the RNA polymerase beta' chain family. RpoC2 subfamily. In plastids the minimal PEP RNA polymerase catalytic core is composed of four subunits: alpha, beta, beta', and beta''. When a (nuclear-encoded) sigma factor is associated with the core the holoenzyme is formed, which can initiate transcription. The cofactor is Zn(2+).

The protein resides in the plastid. Its subcellular location is the chloroplast. It carries out the reaction RNA(n) + a ribonucleoside 5'-triphosphate = RNA(n+1) + diphosphate. In terms of biological role, DNA-dependent RNA polymerase catalyzes the transcription of DNA into RNA using the four ribonucleoside triphosphates as substrates. The protein is DNA-directed RNA polymerase subunit beta'' of Acorus calamus (Sweet flag).